A 334-amino-acid chain; its full sequence is D-fructose 1,6-bisphosphatase class 2/sedoheptulose 1,7-bisphosphatase (334 aa).

Residues Asp33, Glu57, Asp85, and Glu88 each coordinate Mn(2+). Substrate-binding positions include Glu88–Thr90, Tyr119, Arg164–Arg166, and Asp186–Asp188. Glu213 is a binding site for Mn(2+).

It belongs to the FBPase class 2 family. Homotetramer. Requires Mn(2+) as cofactor.

The enzyme catalyses beta-D-fructose 1,6-bisphosphate + H2O = beta-D-fructose 6-phosphate + phosphate. It carries out the reaction D-sedoheptulose 1,7-bisphosphate + H2O = D-sedoheptulose 7-phosphate + phosphate. It functions in the pathway carbohydrate biosynthesis; Calvin cycle. Catalyzes the hydrolysis of fructose 1,6-bisphosphate (Fru 1,6-P2) and sedoheptulose 1,7-bisphosphate (Sed 1,7-P2) to fructose 6-phosphate and sedoheptulose 7-phosphate, respectively. The sequence is that of D-fructose 1,6-bisphosphatase class 2/sedoheptulose 1,7-bisphosphatase from Synechococcus sp. (strain CC9902).